Here is a 148-residue protein sequence, read N- to C-terminus: 3-dehydroquinate dehydratase (148 aa).

Catalysis depends on Tyr-23, which acts as the Proton acceptor. 3 residues coordinate substrate: Asn-75, His-81, and Asp-88. His-101 acts as the Proton donor in catalysis. Residues 102–103 (LS) and Arg-112 each bind substrate.

This sequence belongs to the type-II 3-dehydroquinase family. Homododecamer.

It carries out the reaction 3-dehydroquinate = 3-dehydroshikimate + H2O. The protein operates within metabolic intermediate biosynthesis; chorismate biosynthesis; chorismate from D-erythrose 4-phosphate and phosphoenolpyruvate: step 3/7. Catalyzes a trans-dehydration via an enolate intermediate. This chain is 3-dehydroquinate dehydratase, found in Xanthomonas campestris pv. campestris (strain B100).